We begin with the raw amino-acid sequence, 126 residues long: Small ribosomal subunit protein uS13 (126 aa).

The tract at residues 92-126 (HRRGLPVRGQRTKTNARTRKGPKKTVAGKKKATRK) is disordered.

The protein belongs to the universal ribosomal protein uS13 family. Part of the 30S ribosomal subunit. Forms a loose heterodimer with protein S19. Forms two bridges to the 50S subunit in the 70S ribosome.

Located at the top of the head of the 30S subunit, it contacts several helices of the 16S rRNA. In the 70S ribosome it contacts the 23S rRNA (bridge B1a) and protein L5 of the 50S subunit (bridge B1b), connecting the 2 subunits; these bridges are implicated in subunit movement. Contacts the tRNAs in the A and P-sites. This chain is Small ribosomal subunit protein uS13, found in Deinococcus deserti (strain DSM 17065 / CIP 109153 / LMG 22923 / VCD115).